We begin with the raw amino-acid sequence, 355 residues long: Protein RecA (355 aa).

67–74 is a binding site for ATP; sequence GPESSGKT.

This sequence belongs to the RecA family.

The protein localises to the cytoplasm. In terms of biological role, can catalyze the hydrolysis of ATP in the presence of single-stranded DNA, the ATP-dependent uptake of single-stranded DNA by duplex DNA, and the ATP-dependent hybridization of homologous single-stranded DNAs. It interacts with LexA causing its activation and leading to its autocatalytic cleavage. This chain is Protein RecA, found in Proteus mirabilis (strain HI4320).